The following is a 135-amino-acid chain: Small ribosomal subunit protein bS16m (135 aa).

The N-terminal 34 residues, 1–34 (MVQLTTVLCKAYRGGHLTIRLALGGCTNRPFYRI), are a transit peptide targeting the mitochondrion. T130 is subject to Phosphothreonine.

Belongs to the bacterial ribosomal protein bS16 family. Component of the mitochondrial ribosome small subunit (28S) which comprises a 12S rRNA and about 30 distinct proteins.

Its subcellular location is the mitochondrion. The sequence is that of Small ribosomal subunit protein bS16m (MRPS16) from Bos taurus (Bovine).